Consider the following 635-residue polypeptide: Paraneoplastic antigen-like protein 8B (635 aa).

3 disordered regions span residues 115–202 (PTQA…DESL), 260–332 (TDKS…NPEF), and 492–635 (AARE…PKCR). Over residues 133-147 (SETQAQDSGEVTGQA) the composition is skewed to polar residues. Over residues 156–183 (NPRRGRRGRRNRTRRNRLTQKGKKRSRG) the composition is skewed to basic residues. The span at 261-273 (DKSKKEEAEKEPA) shows a compositional bias: basic and acidic residues. Composition is skewed to acidic residues over residues 302–329 (PDEEPVDSDTSESDSQESGDQETEELDN) and 502–524 (GSEEASDEQSEEESEDTESEASE). Basic residues predominate over residues 531–540 (RKPRAKRART). The span at 541–557 (APRGLTPAGAPPTASGA) shows a compositional bias: low complexity. Basic residues-rich tracts occupy residues 558–568 (RKTRAGGRGRG) and 619–635 (ARGKKARRGRRLPPKCR).

This sequence belongs to the PNMA family.

The protein is Paraneoplastic antigen-like protein 8B of Homo sapiens (Human).